We begin with the raw amino-acid sequence, 473 residues long: Cysteine--tRNA ligase (473 aa).

Cys-28 serves as a coordination point for Zn(2+). Positions 30–40 match the 'HIGH' region motif; sequence PTVYNMPHIGN. Cys-213, His-238, and Glu-242 together coordinate Zn(2+). A 'KMSKS' region motif is present at residues 270–274; that stretch reads KMSKS. Residue Lys-273 participates in ATP binding.

It belongs to the class-I aminoacyl-tRNA synthetase family. Requires Zn(2+) as cofactor.

It localises to the cytoplasm. The catalysed reaction is tRNA(Cys) + L-cysteine + ATP = L-cysteinyl-tRNA(Cys) + AMP + diphosphate. The chain is Cysteine--tRNA ligase from Methanosarcina mazei (strain ATCC BAA-159 / DSM 3647 / Goe1 / Go1 / JCM 11833 / OCM 88) (Methanosarcina frisia).